The following is a 211-amino-acid chain: ATP phosphoribosyltransferase (211 aa).

The protein belongs to the ATP phosphoribosyltransferase family. Short subfamily. Heteromultimer composed of HisG and HisZ subunits.

It localises to the cytoplasm. The catalysed reaction is 1-(5-phospho-beta-D-ribosyl)-ATP + diphosphate = 5-phospho-alpha-D-ribose 1-diphosphate + ATP. It functions in the pathway amino-acid biosynthesis; L-histidine biosynthesis; L-histidine from 5-phospho-alpha-D-ribose 1-diphosphate: step 1/9. Catalyzes the condensation of ATP and 5-phosphoribose 1-diphosphate to form N'-(5'-phosphoribosyl)-ATP (PR-ATP). Has a crucial role in the pathway because the rate of histidine biosynthesis seems to be controlled primarily by regulation of HisG enzymatic activity. The polypeptide is ATP phosphoribosyltransferase (Pseudomonas fluorescens (strain SBW25)).